The sequence spans 461 residues: Mitochondrial distribution and morphology protein 12 (461 aa).

One can recognise an SMP-LTD domain in the interval 1-454 (MSLDLDWNLL…YPNYYTIDLP (454 aa)). Disordered stretches follow at residues 75 to 104 (RRRGARQTTPASNATTLVESPTDSFGVHHG) and 226 to 301 (DASS…PSSA). Polar residues-rich tracts occupy residues 80 to 97 (RQTTPASNATTLVESPTD) and 272 to 288 (RATSAPSFRSISGQNSP).

Belongs to the MDM12 family. As to quaternary structure, component of the ER-mitochondria encounter structure (ERMES) or MDM complex, composed of MMM1, MDM10, MDM12 and MDM34. An MMM1 homodimer associates with one molecule of MDM12 on each side in a pairwise head-to-tail manner, and the SMP-LTD domains of MMM1 and MDM12 generate a continuous hydrophobic tunnel for phospholipid trafficking.

It is found in the mitochondrion outer membrane. Its subcellular location is the endoplasmic reticulum membrane. In terms of biological role, component of the ERMES/MDM complex, which serves as a molecular tether to connect the endoplasmic reticulum (ER) and mitochondria. Components of this complex are involved in the control of mitochondrial shape and protein biogenesis, and function in nonvesicular lipid trafficking between the ER and mitochondria. MDM12 is required for the interaction of the ER-resident membrane protein MMM1 and the outer mitochondrial membrane-resident beta-barrel protein MDM10. The MDM12-MMM1 subcomplex functions in the major beta-barrel assembly pathway that is responsible for biogenesis of all mitochondrial outer membrane beta-barrel proteins, and acts in a late step after the SAM complex. The MDM10-MDM12-MMM1 subcomplex further acts in the TOM40-specific pathway after the action of the MDM12-MMM1 complex. Essential for establishing and maintaining the structure of mitochondria and maintenance of mtDNA nucleoids. This is Mitochondrial distribution and morphology protein 12 from Mycosarcoma maydis (Corn smut fungus).